We begin with the raw amino-acid sequence, 248 residues long: MDRVAFSIFGIDIMWYGILITLGVILGYVVAVKLAKMENISENTILDILVWALPLAIVGARAYYVIFEWDYYSKNLGEIIDIRGGGLAIYGGIIAAVITCYVICKKKNLKFLKMLDIFMPAIALGQAIGRWGNFINKEAYGTPTNLPWAITIDGVKVHPTFLYESLGDFLIFLLLVYVFKNRKKFNGQITSMYMILYGILRFFVEGLRTDSLYIGALRVSQLVSIAIIIAGVILQIKYKKQIIKSDEK.

3 helical membrane passes run 6–26, 48–68, and 84–104; these read FSIF…GVIL, ILVW…VIFE, and GGGL…YVIC. An a 1,2-diacyl-sn-glycero-3-phospho-(1'-sn-glycerol)-binding site is contributed by R130. 2 helical membrane passes run 187–207 and 214–234; these read GQIT…VEGL and IGAL…GVIL.

This sequence belongs to the Lgt family.

It is found in the cell membrane. It catalyses the reaction L-cysteinyl-[prolipoprotein] + a 1,2-diacyl-sn-glycero-3-phospho-(1'-sn-glycerol) = an S-1,2-diacyl-sn-glyceryl-L-cysteinyl-[prolipoprotein] + sn-glycerol 1-phosphate + H(+). It functions in the pathway protein modification; lipoprotein biosynthesis (diacylglyceryl transfer). Functionally, catalyzes the transfer of the diacylglyceryl group from phosphatidylglycerol to the sulfhydryl group of the N-terminal cysteine of a prolipoprotein, the first step in the formation of mature lipoproteins. The sequence is that of Phosphatidylglycerol--prolipoprotein diacylglyceryl transferase from Finegoldia magna (strain ATCC 29328 / DSM 20472 / WAL 2508) (Peptostreptococcus magnus).